The chain runs to 201 residues: MANKGPSYGMSREVQSKIEKKYDEELEERLVEWIVMQCGPDVGRPDRGRLGFQVWLKNGVILSKLVNSLYPEGSKPVKVPENPPSMVFKQMEQVAQFLKAAEDYGVTKTDMFQTVDLFEGKDMAAVQRTVMALGSLAVTKNDGHYRGDPNWFMKKAQEHKREFTDSQLQEGKHVIGLQMGSNRGASQAGMTGYGRPRQIIS.

At alanine 2 the chain carries N-acetylalanine. Residues 24 to 137 (EELEERLVEW…RTVMALGSLA (114 aa)) enclose the Calponin-homology (CH) domain. Residues 154–161 (KKAQEHKR) are could be involved in actin-binding. Position 166 is a phosphoserine (serine 166). At lysine 172 the chain carries N6-acetyllysine. The stretch at 175–200 (IGLQMGSNRGASQAGMTGYGRPRQII) is one Calponin-like repeat. A Phosphoserine modification is found at serine 181. Arginine 183 bears the Omega-N-methylarginine mark.

Belongs to the calponin family. As to expression, smooth muscle and mesenchymal cells but not in skeletal muscle or lymphocytes.

The protein resides in the cytoplasm. Actin cross-linking/gelling protein. The chain is Transgelin (Tagln) from Rattus norvegicus (Rat).